The following is a 447-amino-acid chain: GTPase Der (447 aa).

EngA-type G domains are found at residues 3-167 (PVIA…HLAD) and 180-353 (IRLA…ASAN). Residues 9 to 16 (GRPNVGKS), 56 to 60 (DTGGF), 119 to 122 (NKAE), 186 to 193 (GRPNVGKS), 233 to 237 (DTAGL), and 298 to 301 (NKWD) contribute to the GTP site. A KH-like domain is found at 354–438 (RKMSTPVLTR…PMRIQMKSSH (85 aa)).

It belongs to the TRAFAC class TrmE-Era-EngA-EngB-Septin-like GTPase superfamily. EngA (Der) GTPase family. Associates with the 50S ribosomal subunit.

In terms of biological role, GTPase that plays an essential role in the late steps of ribosome biogenesis. This chain is GTPase Der, found in Polaromonas sp. (strain JS666 / ATCC BAA-500).